The following is a 465-amino-acid chain: Midnolin (465 aa).

Residues 32-106 form the Ubiquitin-like domain; sequence MSLAIHSTTG…LTLVPTVEAG (75 aa). Disordered regions lie at residues 185-262 and 400-445; these read SVAT…SRKP and RLRR…GLDF. Low complexity-rich tracts occupy residues 195-219 and 240-257; these read RPVS…PSPV and SPPA…SPTP. The segment at 397-424 is required for nucleolar localization; that stretch reads QQKRLRRKARRDARGPYHWTPSRKAGRS.

As to quaternary structure, interacts with GCK; the interaction occurs preferentially at low glucose levels. Interacts with the proteasome. As to expression, expressed at high levels in brain and liver with significantly lower levels in muscle.

Its subcellular location is the nucleus. It localises to the cytoplasm. The protein resides in the cytosol. It is found in the nucleolus. In terms of biological role, facilitates the ubiquitin-independent proteasomal degradation of stimulus-induced transcription factors such as FOSB, EGR1, NR4A1, and IRF4 to the proteasome for degradation. Promotes also the degradation of other substrates such as CBX4. Plays a role in inhibiting the activity of glucokinase GCK and both glucose-induced and basal insulin secretion. This is Midnolin (Midn) from Mus musculus (Mouse).